The following is a 335-amino-acid chain: Pharynx and intestine in excess protein 1 (335 aa).

A Glycyl lysine isopeptide (Lys-Gly) (interchain with G-Cter in SUMO) cross-link involves residue lysine 68. The C3H1-type 1 zinc-finger motif lies at 98–126 (EYKTRLCDAFRREGYCPYNDNCTYAHGQD). Basic and acidic residues predominate over residues 130 to 156 (VPRRRQEYYSRDPPRERRDSRSRRDDV). A disordered region spans residues 130-188 (VPRRRQEYYSRDPPRERRDSRSRRDDVDTTINRSSSSASKHHDENRRPSNNHGSSNRRQ). 2 stretches are compositionally biased toward polar residues: residues 158 to 167 (TTINRSSSSA) and 177 to 187 (PSNNHGSSNRR). The segment at 184 to 211 (SNRRQICHNFERGNCRYGPRCRFIHVEQ) adopts a C3H1-type 2 zinc-finger fold. The required for inhibition of Ser-2 phosphorylation stretch occupies residues 288-291 (MAPT).

As to quaternary structure, interacts with hda-1, let-418 and mep-1. Interacts (via C terminus) with cit-1.1 (via C terminus). Sumoylated in adult germ cells.

It localises to the nucleus. The protein resides in the cytoplasm. Its subcellular location is the cytoskeleton. The protein localises to the microtubule organizing center. It is found in the centrosome. It localises to the spindle. The protein resides in the cytoplasmic granule. Its function is as follows. Maternally provided pie-1 is required for germline cell fate determination. Functions as a repressor of RNA polymerase II-dependent gene expression in the developing germline. Required for expression of nos-2 in P4 germline blastomere cells. Inhibits the histone deacetylase activity of hda-1. Represses transcriptional activation of cdk-9 and cit-1.1, which are members of the P-TEFb complex. Acts redundantly with gei-17 to promote piRNA-mediated silencing and fertility in adult germline. Promotes the sumoylation of hda-1 in adult animals but not in embryos thereby regulating its interaction with mep-1. The sequence is that of Pharynx and intestine in excess protein 1 from Caenorhabditis elegans.